A 491-amino-acid polypeptide reads, in one-letter code: Katanin p60 ATPase-containing subunit A1 (491 aa).

The tract at residues 1–29 is interaction with KATNB1; that stretch reads MSLLMISENVKLAREYALLGNYDSAMVYY. The interval 1–75 is interaction with dynein and NDEL1; sequence MSLLMISENV…VKDIMKTLES (75 aa). Residues 1–185 form an interaction with microtubules region; that stretch reads MSLLMISENV…EPETNKFDST (185 aa). Phosphoserine; by DYRK2 is present on residues serine 42 and serine 109. The tract at residues 87–185 is disordered; it reads QHDLPASEGE…EPETNKFDST (99 aa). Over residues 117-144 the composition is skewed to polar residues; it reads SSQYSDPKSHGNRPSTTVRVHRSSAQNV. Residue threonine 133 is modified to Phosphothreonine; by DYRK2. Residues 145–169 are compositionally biased toward basic and acidic residues; the sequence is HNDRGKAVRCREKKEQNKGREEKNK. Residue serine 170 is modified to Phosphoserine. 249 to 256 lines the ATP pocket; it reads GPPGTGKT.

This sequence belongs to the AAA ATPase family. Katanin p60 subunit A1 subfamily. As to quaternary structure, can homooligomerize into hexameric rings, which may be promoted by interaction with microtubules. Interacts with KATNB1, which may serve as a targeting subunit. Interacts with ASPM; the katanin complex formation KATNA1:KATNB1 is required for the association of ASPM. Interacts with dynein and NDEL1. Associates with the E3 ligase complex containing DYRK2, EDD/UBR5, DDB1 and DCAF1 proteins (EDVP complex). Interacts with KLHL42 (via the kelch domains). Interacts with CUL3; the interaction is enhanced by KLHL42. Interacts with KATNB1 and KATNBL1. Interacts with CAMSAP2 and CAMSAP3; leading to regulate the length of CAMSAP-decorated microtubule stretches. Post-translationally, phosphorylation by DYRK2 triggers ubiquitination and subsequent degradation. In terms of processing, ubiquitinated by the BCR(KLHL42) E3 ubiquitin ligase complex, leading to its proteasomal degradation. Ubiquitinated by the EDVP E3 ligase complex and subsequently targeted for proteasomal degradation.

It localises to the cytoplasm. Its subcellular location is the midbody. The protein localises to the cytoskeleton. The protein resides in the microtubule organizing center. It is found in the centrosome. It localises to the spindle pole. Its subcellular location is the spindle. It carries out the reaction n ATP + n H2O + a microtubule = n ADP + n phosphate + (n+1) alpha/beta tubulin heterodimers.. Its activity is regulated as follows. ATPase activity is stimulated by microtubules, which promote homooligomerization. ATP-dependent microtubule severing is stimulated by interaction with KATNB1. Catalytic subunit of a complex which severs microtubules in an ATP-dependent manner. Microtubule severing may promote rapid reorganization of cellular microtubule arrays and the release of microtubules from the centrosome following nucleation. Microtubule release from the mitotic spindle poles may allow depolymerization of the microtubule end proximal to the spindle pole, leading to poleward microtubule flux and poleward motion of chromosome. Microtubule release within the cell body of neurons may be required for their transport into neuronal processes by microtubule-dependent motor proteins. This transport is required for axonal growth. This Homo sapiens (Human) protein is Katanin p60 ATPase-containing subunit A1.